The primary structure comprises 919 residues: Isoleucine--tRNA ligase (919 aa).

The 'HIGH' region motif lies at proline 57 to threonine 67. Glutamate 553 provides a ligand contact to L-isoleucyl-5'-AMP. The short motif at lysine 594–serine 598 is the 'KMSKS' region element. ATP is bound at residue lysine 597. Cysteine 887, cysteine 890, cysteine 907, and cysteine 910 together coordinate Zn(2+).

This sequence belongs to the class-I aminoacyl-tRNA synthetase family. IleS type 1 subfamily. As to quaternary structure, monomer. The cofactor is Zn(2+).

It is found in the cytoplasm. The enzyme catalyses tRNA(Ile) + L-isoleucine + ATP = L-isoleucyl-tRNA(Ile) + AMP + diphosphate. Catalyzes the attachment of isoleucine to tRNA(Ile). As IleRS can inadvertently accommodate and process structurally similar amino acids such as valine, to avoid such errors it has two additional distinct tRNA(Ile)-dependent editing activities. One activity is designated as 'pretransfer' editing and involves the hydrolysis of activated Val-AMP. The other activity is designated 'posttransfer' editing and involves deacylation of mischarged Val-tRNA(Ile). This Thermotoga petrophila (strain ATCC BAA-488 / DSM 13995 / JCM 10881 / RKU-1) protein is Isoleucine--tRNA ligase.